Here is a 328-residue protein sequence, read N- to C-terminus: Glycerol-3-phosphate dehydrogenase [NAD(P)+] (328 aa).

NADPH-binding residues include W15, R35, R36, and K105. Sn-glycerol 3-phosphate is bound by residues K105 and G131. Residue A135 participates in NADPH binding. Positions 186, 239, 249, 250, and 251 each coordinate sn-glycerol 3-phosphate. K186 serves as the catalytic Proton acceptor. R250 lines the NADPH pocket. 2 residues coordinate NADPH: V270 and E272.

Belongs to the NAD-dependent glycerol-3-phosphate dehydrogenase family.

It is found in the cytoplasm. The enzyme catalyses sn-glycerol 3-phosphate + NAD(+) = dihydroxyacetone phosphate + NADH + H(+). It carries out the reaction sn-glycerol 3-phosphate + NADP(+) = dihydroxyacetone phosphate + NADPH + H(+). It participates in membrane lipid metabolism; glycerophospholipid metabolism. Functionally, catalyzes the reduction of the glycolytic intermediate dihydroxyacetone phosphate (DHAP) to sn-glycerol 3-phosphate (G3P), the key precursor for phospholipid synthesis. This is Glycerol-3-phosphate dehydrogenase [NAD(P)+] from Deinococcus radiodurans (strain ATCC 13939 / DSM 20539 / JCM 16871 / CCUG 27074 / LMG 4051 / NBRC 15346 / NCIMB 9279 / VKM B-1422 / R1).